Reading from the N-terminus, the 183-residue chain is ATP synthase subunit b, chloroplastic (183 aa).

A helical transmembrane segment spans residues 20–42 (INTNVFETNIINLAIVVGTLFYY).

The protein belongs to the ATPase B chain family. In terms of assembly, F-type ATPases have 2 components, F(1) - the catalytic core - and F(0) - the membrane proton channel. F(1) has five subunits: alpha(3), beta(3), gamma(1), delta(1), epsilon(1). F(0) has four main subunits: a(1), b(1), b'(1) and c(10-14). The alpha and beta chains form an alternating ring which encloses part of the gamma chain. F(1) is attached to F(0) by a central stalk formed by the gamma and epsilon chains, while a peripheral stalk is formed by the delta, b and b' chains.

The protein localises to the plastid. It localises to the chloroplast thylakoid membrane. In terms of biological role, f(1)F(0) ATP synthase produces ATP from ADP in the presence of a proton or sodium gradient. F-type ATPases consist of two structural domains, F(1) containing the extramembraneous catalytic core and F(0) containing the membrane proton channel, linked together by a central stalk and a peripheral stalk. During catalysis, ATP synthesis in the catalytic domain of F(1) is coupled via a rotary mechanism of the central stalk subunits to proton translocation. Its function is as follows. Component of the F(0) channel, it forms part of the peripheral stalk, linking F(1) to F(0). This is ATP synthase subunit b, chloroplastic from Euglena gracilis.